The chain runs to 188 residues: Putative manganese efflux pump MntP (188 aa).

Helical transmembrane passes span 3–23 (MITLFGLALALAMDAFAVALG), 39–59 (LGWHFGLFQAMMPIIGWLAGL), 65–85 (IETYDHWVAFGLLVCVGGKMI), 104–124 (GMSLIMLSVATSIDALAVGLS), 125–145 (LAIVGISVWFPALIIGIIAGV), and 167–187 (IAGGLILIGIGLKILWEHTLG).

This sequence belongs to the MntP (TC 9.B.29) family.

The protein localises to the cell inner membrane. In terms of biological role, probably functions as a manganese efflux pump. This Syntrophotalea carbinolica (strain DSM 2380 / NBRC 103641 / GraBd1) (Pelobacter carbinolicus) protein is Putative manganese efflux pump MntP.